The following is an 88-amino-acid chain: Large ribosomal subunit protein bL27 (88 aa).

Residues methionine 1–leucine 21 form a disordered region.

It belongs to the bacterial ribosomal protein bL27 family.

This chain is Large ribosomal subunit protein bL27, found in Picosynechococcus sp. (strain ATCC 27264 / PCC 7002 / PR-6) (Agmenellum quadruplicatum).